The primary structure comprises 373 residues: Enoyl-[acyl-carrier-protein] reductase, mitochondrial (373 aa).

A mitochondrion-targeting transit peptide spans 1–53 (MWVCSTLWRVRTPARQWRGLLPASGCHGPAASSYSASAEPARVRALVYGHHGD). The residue at position 61 (Lys-61) is an N6-acetyllysine; alternate. Lys-61 is modified (N6-succinyllysine; alternate). Residue Tyr-94 is the Proton donor of the active site. Residues Asn-167, 193–196 (NSGV), and 216–218 (RDR) contribute to the NADP(+) site. An N6-acetyllysine; alternate mark is found at Lys-252 and Lys-267. N6-succinyllysine; alternate occurs at positions 252 and 267. NADP(+) is bound by residues 285 to 288 (YGGM) and 310 to 312 (FWL). The residue at position 316 (Lys-316) is an N6-succinyllysine. Lys-368 contacts NADP(+).

It belongs to the zinc-containing alcohol dehydrogenase family. Quinone oxidoreductase subfamily. As to quaternary structure, homodimer. Isoform 2 interacts with PPARA in the nucleus and increases its activity. Highly expressed in skeletal and heart muscle. Expressed at lower level in placenta, liver, kidney and pancreas. Weakly or not expressed in lung.

The protein resides in the mitochondrion. It is found in the cytoplasm. It localises to the nucleus. It carries out the reaction a 2,3-saturated acyl-[ACP] + NADP(+) = a (2E)-enoyl-[ACP] + NADPH + H(+). The catalysed reaction is (2E)-butenoyl-[ACP] + NADPH + H(+) = butanoyl-[ACP] + NADP(+). The enzyme catalyses (2E)-hexenoyl-[ACP] + NADPH + H(+) = hexanoyl-[ACP] + NADP(+). It catalyses the reaction (2E)-octenoyl-[ACP] + NADPH + H(+) = octanoyl-[ACP] + NADP(+). It carries out the reaction (2E)-decenoyl-[ACP] + NADPH + H(+) = decanoyl-[ACP] + NADP(+). The catalysed reaction is (2E)-dodecenoyl-[ACP] + NADPH + H(+) = dodecanoyl-[ACP] + NADP(+). The enzyme catalyses (2E)-tetradecenoyl-[ACP] + NADPH + H(+) = tetradecanoyl-[ACP] + NADP(+). It catalyses the reaction (2E)-hexadecenoyl-[ACP] + NADPH + H(+) = hexadecanoyl-[ACP] + NADP(+). Functionally, catalyzes the NADPH-dependent reduction of trans-2-enoyl thioesters in mitochondrial fatty acid synthesis (fatty acid synthesis type II). Fatty acid chain elongation in mitochondria uses acyl carrier protein (ACP) as an acyl group carrier, but the enzyme accepts both ACP and CoA thioesters as substrates in vitro. Displays a preference for medium-chain over short- and long-chain substrates. May provide the octanoyl chain used for lipoic acid biosynthesis, regulating protein lipoylation and mitochondrial respiratory activity particularly in Purkinje cells. Involved in iron homeostasis; affecting Fe-S cluster assembly and ceramide metabolism. Required for proper morphology and bioenergetic functions of mitochondria. Required for maintenance of neurons. The polypeptide is Enoyl-[acyl-carrier-protein] reductase, mitochondrial (MECR) (Homo sapiens (Human)).